A 138-amino-acid chain; its full sequence is ATP synthase epsilon chain, chloroplastic (138 aa).

Belongs to the ATPase epsilon chain family. As to quaternary structure, F-type ATPases have 2 components, CF(1) - the catalytic core - and CF(0) - the membrane proton channel. CF(1) has five subunits: alpha(3), beta(3), gamma(1), delta(1), epsilon(1). CF(0) has three main subunits: a, b and c.

Its subcellular location is the plastid. The protein localises to the chloroplast thylakoid membrane. Its function is as follows. Produces ATP from ADP in the presence of a proton gradient across the membrane. The sequence is that of ATP synthase epsilon chain, chloroplastic from Galdieria sulphuraria (Red alga).